The primary structure comprises 374 residues: Proteasomal ubiquitin receptor ADRM1 homolog (374 aa).

One can recognise a Pru domain in the interval 13–131 (SSSGHIVEFK…KKVTDALNKP (119 aa)). Disordered regions lie at residues 126 to 166 (DALN…MNAP), 187 to 223 (SDTL…NPLS), and 334 to 374 (ANLT…MDVD). 2 stretches are compositionally biased toward polar residues: residues 141-163 (SAGS…SSDM) and 209-223 (PSTN…NPLS). The region spanning 239 to 346 (SQKKEVAVSL…TKAEGGEDAA (108 aa)) is the DEUBAD domain. Residues 354–368 (DATREPEPKRNRPDN) are compositionally biased toward basic and acidic residues.

Belongs to the ADRM1 family. In terms of assembly, component of the 19S proteasome regulatory particle complex. The 26S proteasome consists of a 20S core particle (CP) and two 19S regulatory subunits (RP). Interacts with deubiquitinase ubh-4.

It is found in the cytoplasm. It localises to the nucleus. May function as a proteasomal ubiquitin receptor. May promote the deubiquitinating activity associated with the 26S proteasome. This Caenorhabditis elegans protein is Proteasomal ubiquitin receptor ADRM1 homolog.